The chain runs to 185 residues: uncharacterized protein (185 aa).

Belongs to the EUO family.

This is an uncharacterized protein from Chlamydia muridarum (strain MoPn / Nigg).